Reading from the N-terminus, the 734-residue chain is Photosystem I P700 chlorophyll a apoprotein A2 (734 aa).

The next 8 membrane-spanning stretches (helical) occupy residues 46–69 (IFASHFGQLAIIFLWTSGNLFHVA), 135–158 (LYTGALFLLFLSAISLIAGWLHLQ), 175–199 (LNHHLSGLFGVSSLAWTGHLVHVAI), 273–291 (IAHHHLAIAFIFLVAGHMY), 330–353 (IHFQLGLALASLGVITSLVAQHMY), 369–395 (AALYTHHQYIAGFIMTGAFAHGAIFFI), 417–439 (AIISHLSWASLFLGFHTLGLYVH), and 517–535 (FLVHHAIALGLHTTTLILV). [4Fe-4S] cluster is bound by residues Cys-559 and Cys-568. Transmembrane regions (helical) follow at residues 575–596 (AFYLAVFWMLNTIGWVTFYWHW) and 643–665 (LSVWAWMFLFGHLVWATGFMFLI). Residues His-654, Met-662, and Tyr-670 each contribute to the chlorophyll a site. Trp-671 provides a ligand contact to phylloquinone. A helical transmembrane segment spans residues 707–727 (LVGLAHFSVGYIFTYAAFLIA).

This sequence belongs to the PsaA/PsaB family. The PsaA/B heterodimer binds the P700 chlorophyll special pair and subsequent electron acceptors. PSI consists of a core antenna complex that captures photons, and an electron transfer chain that converts photonic excitation into a charge separation. The eukaryotic PSI reaction center is composed of at least 11 subunits. P700 is a chlorophyll a/chlorophyll a' dimer, A0 is one or more chlorophyll a, A1 is one or both phylloquinones and FX is a shared 4Fe-4S iron-sulfur center. is required as a cofactor.

It localises to the plastid. The protein resides in the chloroplast thylakoid membrane. The enzyme catalyses reduced [plastocyanin] + hnu + oxidized [2Fe-2S]-[ferredoxin] = oxidized [plastocyanin] + reduced [2Fe-2S]-[ferredoxin]. In terms of biological role, psaA and PsaB bind P700, the primary electron donor of photosystem I (PSI), as well as the electron acceptors A0, A1 and FX. PSI is a plastocyanin-ferredoxin oxidoreductase, converting photonic excitation into a charge separation, which transfers an electron from the donor P700 chlorophyll pair to the spectroscopically characterized acceptors A0, A1, FX, FA and FB in turn. Oxidized P700 is reduced on the lumenal side of the thylakoid membrane by plastocyanin. This is Photosystem I P700 chlorophyll a apoprotein A2 from Vitis vinifera (Grape).